We begin with the raw amino-acid sequence, 75 residues long: Probable protein BRICK1-B (75 aa).

Residues 41 to 72 are a coiled coil; that stretch reads MSCRSRLATLNEKLTTLERRIEYIEARVTKGE.

This sequence belongs to the BRK1 family.

The protein resides in the cytoplasm. The protein localises to the cytoskeleton. Functionally, involved in regulation of actin and microtubule organization. Part of a WAVE complex that activates the Arp2/3 complex. This chain is Probable protein BRICK1-B (brk1-b), found in Xenopus laevis (African clawed frog).